The following is a 61-amino-acid chain: uncharacterized protein (61 aa).

Over 1–20 (MSSTTSTINLSSLGSAINDV) the chain is Extracellular. Residues 21-41 (LNIIVQYLPVFVTVAVLFGII) form a helical membrane-spanning segment. The Cytoplasmic segment spans residues 42 to 61 (TYMTGGLGGLFSGITGIFGS).

The protein resides in the host membrane. This is an uncharacterized protein from Acidianus filamentous virus 2 (isolate Italy/Pozzuoli) (AFV-2).